Reading from the N-terminus, the 314-residue chain is MRFKGLDLNLLVVLDALMTERNLTAAARSINLSQPAMSAAVARLRTNFRDDLFAMAGREFIPTPRAEGLAPAVRDALLQIQLSIVSWEPFNPAQSDRRFRIVLSDYVTLVFFEKVVARAAQEAPGISFDCLPLADDFEELLRRGDIDFLIMPELFMSMHPHAALFEDKFVCVGCRTNEQLSEPFTFERYMSMGHVAVKFGNTRRPTIEEWYLLEHGLKRRIEVVVQGFSMIPPMLSGTERIGTMPLRLAQHFAKTIPLRIVELPLPIPPLAEAVQWPALHNSDPASLWMRELLLQEASLMVSPRAPVRLSAPGF.

An HTH lysR-type domain is found at 6 to 63 (LDLNLLVVLDALMTERNLTAAARSINLSQPAMSAAVARLRTNFRDDLFAMAGREFIPT). A DNA-binding region (H-T-H motif) is located at residues 23 to 42 (LTAAARSINLSQPAMSAAVA).

Belongs to the LysR transcriptional regulatory family.

In terms of biological role, nodD regulates the expression of the nodABCFE genes which encode other nodulation proteins. NodD is also a negative regulator of its own expression. Binds flavonoids as inducers. The chain is Nodulation protein D 2 (nodD2) from Rhizobium tropici.